Here is a 20-residue protein sequence, read N- to C-terminus: 21 kDa cold shock-induced protein (20 aa).

The segment covering 1–12 has biased composition (basic and acidic residues); it reads TDSIKETIKETV. Residues 1–20 are disordered; the sequence is TDSIKETIKETVNHQAEWPY.

The polypeptide is 21 kDa cold shock-induced protein (Streptococcus thermophilus).